Reading from the N-terminus, the 386-residue chain is Oxysterol-binding protein-related protein 4A (386 aa).

Belongs to the OSBP family. As to expression, expressed in roots, stems and flowers.

Its function is as follows. May be involved in the transport of sterols. The sequence is that of Oxysterol-binding protein-related protein 4A (ORP4A) from Arabidopsis thaliana (Mouse-ear cress).